We begin with the raw amino-acid sequence, 448 residues long: UPF0210 protein PAE3581 (448 aa).

It belongs to the UPF0210 family.

This chain is UPF0210 protein PAE3581, found in Pyrobaculum aerophilum (strain ATCC 51768 / DSM 7523 / JCM 9630 / CIP 104966 / NBRC 100827 / IM2).